We begin with the raw amino-acid sequence, 267 residues long: Putative transcription factor Ovo-like 1 (267 aa).

4 consecutive C2H2-type zinc fingers follow at residues 118-140 (FTCR…MKCH), 146-168 (HLCT…VRTH), 174-197 (YKCS…KKIH), and 213-235 (YVCE…LKEH).

As to expression, expressed in fetal kidney, and also in adult pancreas and placenta. Not expressed in intestine, peripheral blood lymphocytes and ovary.

It localises to the nucleus. Its function is as follows. Putative transcription factor. Involved in hair formation and spermatogenesis. May function in the differentiation and/or maintenance of the urogenital system. The polypeptide is Putative transcription factor Ovo-like 1 (OVOL1) (Homo sapiens (Human)).